Reading from the N-terminus, the 802-residue chain is Acetyl-CoA decarbonylase/synthase complex subunit alpha 1 (802 aa).

Residues cysteine 68, cysteine 71, cysteine 76, and cysteine 86 each contribute to the [4Fe-4S] cluster site. A CO-binding site is contributed by histidine 109. [Ni-4Fe-4S] cluster contacts are provided by histidine 243, cysteine 271, and cysteine 310. 2 consecutive 4Fe-4S ferredoxin-type domains span residues 395-424 and 435-464; these read DEALMEEINKCTQCMNCVFTCPHSLRVDQG and SKLAQLEEQCLACMKCEQACPKNIKIINVI. The [4Fe-4S] cluster site is built by cysteine 405, cysteine 408, cysteine 411, cysteine 415, cysteine 444, cysteine 447, cysteine 450, and cysteine 454. Residues cysteine 512, cysteine 541, and cysteine 576 each coordinate [Ni-4Fe-4S] cluster.

This sequence belongs to the Ni-containing carbon monoxide dehydrogenase family. In terms of assembly, heterotetramer of two alpha and two epsilon subunits. The ACDS complex is made up of alpha, epsilon, beta, gamma and delta subunits with a probable stoichiometry of (alpha(2)epsilon(2))(4)-beta(8)-(gamma(1)delta(1))(8). It depends on [4Fe-4S] cluster as a cofactor. Requires [Ni-4Fe-4S] cluster as cofactor.

The catalysed reaction is CO + 2 oxidized [2Fe-2S]-[ferredoxin] + H2O = 2 reduced [2Fe-2S]-[ferredoxin] + CO2 + 2 H(+). Functionally, part of the ACDS complex that catalyzes the reversible cleavage of acetyl-CoA, allowing autotrophic growth from CO(2). The alpha-epsilon subcomponent functions as a carbon monoxide dehydrogenase. The chain is Acetyl-CoA decarbonylase/synthase complex subunit alpha 1 from Archaeoglobus fulgidus (strain ATCC 49558 / DSM 4304 / JCM 9628 / NBRC 100126 / VC-16).